The following is a 326-amino-acid chain: Polycomb complex protein BMI-1 (326 aa).

The RING-type zinc finger occupies 18-57 (CVLCGGYFIDATTIIECLHSFCKTCIVRYLETSKYCPICD). Residues 81–95 (KLVPGLFKNEMKRRR) carry the Nuclear localization signal motif. The interaction with PHC2 stretch occupies residues 162–182 (RYLRCPAAMTVMHLRKFLRSK). Positions 164–228 (LRCPAAMTVM…GPLPLKYRVR (65 aa)) are interaction with E4F1. The interval 236–326 (ISHQRDGLTN…VNGSSATSSG (91 aa)) is disordered. Low complexity-rich tracts occupy residues 266–278 (PSTSSCLPSPSTP), 290–303 (SSTMNGTSSSPSGN), and 315–326 (SSVNGSSATSSG).

Component of a PRC1-like complex. Identified in a PRC1-like HPRC-H complex with CBX2, CBX4, CBX8, PHC1, PHC2, PHC3 RING1 and RNF2. Interacts with RNF2/RING2. Interacts with RING1. Part of a complex that contains RNF2, UB2D3 and BMI1, where RNF2 and BMI1 form a tight heterodimer, and UB2D3 interacts only with RNF2. The complex composed of RNF2, UB2D3 and BMI1 binds nucleosomes, and has activity only with nucleosomal histone H2A. Interacts with CBX7 and CBX8. Interacts with SPOP. Part of a complex consisting of BMI1, CUL3 and SPOP. Interacts with E4F1. Interacts with PHC2. Interacts with zinc finger protein ZNF277. May be part of a complex including at least ZNF277, BMI1 and RNF2/RING2. Post-translationally, may be polyubiquitinated; which does not lead to proteasomal degradation. Monoubiquitinated.

Its subcellular location is the nucleus. It is found in the cytoplasm. Its function is as follows. Component of a Polycomb group (PcG) multiprotein PRC1-like complex, a complex class required to maintain the transcriptionally repressive state of many genes, including Hox genes, throughout development. PcG PRC1 complex acts via chromatin remodeling and modification of histones; it mediates monoubiquitination of histone H2A 'Lys-119', rendering chromatin heritably changed in its expressibility. The complex composed of RNF2, UB2D3 and BMI1 binds nucleosomes, and has activity only with nucleosomal histone H2A. In the PRC1-like complex, regulates the E3 ubiquitin-protein ligase activity of RNF2/RING2. The chain is Polycomb complex protein BMI-1 (BMI1) from Bos taurus (Bovine).